Here is a 362-residue protein sequence, read N- to C-terminus: Adenosine deaminase (362 aa).

Zn(2+)-binding residues include H19 and H21. Residues H21, D23, and G181 each contribute to the substrate site. H208 provides a ligand contact to Zn(2+). Catalysis depends on E211, which acts as the Proton donor. D300 lines the Zn(2+) pocket.

It belongs to the metallo-dependent hydrolases superfamily. Adenosine and AMP deaminases family. Adenosine deaminase subfamily. Requires Zn(2+) as cofactor.

It catalyses the reaction adenosine + H2O + H(+) = inosine + NH4(+). It carries out the reaction 2'-deoxyadenosine + H2O + H(+) = 2'-deoxyinosine + NH4(+). Catalyzes the hydrolytic deamination of adenosine and 2-deoxyadenosine. This is Adenosine deaminase from Mycobacterium sp. (strain JLS).